Reading from the N-terminus, the 78-residue chain is Exodeoxyribonuclease 7 small subunit (78 aa).

The protein belongs to the XseB family. As to quaternary structure, heterooligomer composed of large and small subunits.

Its subcellular location is the cytoplasm. The catalysed reaction is Exonucleolytic cleavage in either 5'- to 3'- or 3'- to 5'-direction to yield nucleoside 5'-phosphates.. Bidirectionally degrades single-stranded DNA into large acid-insoluble oligonucleotides, which are then degraded further into small acid-soluble oligonucleotides. The chain is Exodeoxyribonuclease 7 small subunit from Paracoccus zeaxanthinifaciens.